Reading from the N-terminus, the 563-residue chain is BOS complex subunit NCLN (563 aa).

Residues methionine 1–alanine 42 form the signal peptide. Residues alanine 43 to alanine 522 lie on the Lumenal side of the membrane. Asparagine 241 and asparagine 428 each carry an N-linked (GlcNAc...) asparagine glycan. The helical transmembrane segment at isoleucine 523–valine 543 threads the bilayer. Residues glutamine 544–glutamine 563 lie on the Cytoplasmic side of the membrane.

It belongs to the nicastrin family. As to quaternary structure, component of the back of Sec61 (BOS) complex, composed of NCLN/Nicalin, NOMO1 and TMEM147. The BOS complex is part of the multi-pass translocon (MPT) complex, composed of three subcomplexes, the GEL complex (composed of RAB5IF/OPTI and TMCO1), the BOS complex (composed of NCLN/Nicalin, NOMO1 and TMEM147) and the PAT complex (composed of WDR83OS/Asterix and CCDC47). The MPT complex associates with the SEC61 complex.

The protein localises to the endoplasmic reticulum membrane. In terms of biological role, component of the multi-pass translocon (MPT) complex that mediates insertion of multi-pass membrane proteins into the lipid bilayer of membranes. The MPT complex takes over after the SEC61 complex: following membrane insertion of the first few transmembrane segments of proteins by the SEC61 complex, the MPT complex occludes the lateral gate of the SEC61 complex to promote insertion of subsequent transmembrane regions. May antagonize Nodal signaling and subsequent organization of axial structures during mesodermal patterning, via its interaction with NOMO. In Canis lupus familiaris (Dog), this protein is BOS complex subunit NCLN.